The following is a 612-amino-acid chain: uncharacterized protein (612 aa).

Polar residues predominate over residues 176-196; sequence LVQRNNATTSPTTDSASENNE. A disordered region spans residues 176-203; it reads LVQRNNATTSPTTDSASENNESVPSLTS.

It to yeast YNL034w.

This is an uncharacterized protein from Saccharomyces cerevisiae (strain ATCC 204508 / S288c) (Baker's yeast).